Consider the following 299-residue polypeptide: MKPDAAQVKTFLLQLQDNLCQQLSAVDGAPFIEDAWQREGGGGGRSRVLRDGNVFEQAGVNFSHVHGDAMPASATAHRPELAGRSFEAMGVSLVVHPLNPYVPTSHANVRFFIAEKPGADPVWWFGGGFDLTPYYGFEEDAIHWHRTARDLCLPFGEEVYPRYKKWCDDYFYLKHRQEQRGIGGLFFDDLNTPDFDHCFAFMQAVGNGYADAYLPIVERRKAMPYGERERHFQLYRRGRYVEFNLVWDRGTLFGLQTGGRTESILMSMPPLVRWEYDYQPEPGSPEAALSEFIQVRDWL.

Ser-92 serves as a coordination point for substrate. A divalent metal cation-binding residues include His-96 and His-106. Residue His-106 is the Proton donor of the active site. Asn-108–Arg-110 serves as a coordination point for substrate. A divalent metal cation-binding residues include His-145 and His-175. The interval Tyr-240–Glu-275 is important for dimerization. Residue Gly-258–Arg-260 participates in substrate binding.

Belongs to the aerobic coproporphyrinogen-III oxidase family. Homodimer. A divalent metal cation serves as cofactor.

It localises to the cytoplasm. The enzyme catalyses coproporphyrinogen III + O2 + 2 H(+) = protoporphyrinogen IX + 2 CO2 + 2 H2O. Its pathway is porphyrin-containing compound metabolism; protoporphyrin-IX biosynthesis; protoporphyrinogen-IX from coproporphyrinogen-III (O2 route): step 1/1. Its function is as follows. Involved in the heme biosynthesis. Catalyzes the aerobic oxidative decarboxylation of propionate groups of rings A and B of coproporphyrinogen-III to yield the vinyl groups in protoporphyrinogen-IX. In Klebsiella pneumoniae (strain 342), this protein is Oxygen-dependent coproporphyrinogen-III oxidase.